The primary structure comprises 360 residues: Peptide chain release factor 1 (360 aa).

The residue at position 237 (Gln237) is an N5-methylglutamine.

The protein belongs to the prokaryotic/mitochondrial release factor family. Methylated by PrmC. Methylation increases the termination efficiency of RF1.

The protein resides in the cytoplasm. In terms of biological role, peptide chain release factor 1 directs the termination of translation in response to the peptide chain termination codons UAG and UAA. In Pseudomonas aeruginosa (strain ATCC 15692 / DSM 22644 / CIP 104116 / JCM 14847 / LMG 12228 / 1C / PRS 101 / PAO1), this protein is Peptide chain release factor 1 (prfA).